We begin with the raw amino-acid sequence, 167 residues long: Iron-sulfur cluster assembly protein 1 (167 aa).

The N-terminal 50 residues, 1 to 50, are a transit peptide targeting the mitochondrion; the sequence is MMLKQAAKKALGLTSRQSTPWSVGILRTYHENVIDHYDNPRNVGSFDKND.

Belongs to the NifU family. In terms of assembly, component of the core Fe-S cluster (ISC) assembly machinery. Interacts with HSCB. Requires [2Fe-2S] cluster as cofactor. Expressed in roots, stems, leaves, flowers, pollen and siliques.

It is found in the mitochondrion matrix. The protein localises to the cytoplasm. It localises to the cytosol. It participates in cofactor biosynthesis; iron-sulfur cluster biosynthesis. In terms of biological role, scaffold protein for the de novo synthesis of iron-sulfur (Fe-S) clusters within mitochondria, which is required for maturation of both mitochondrial and cytoplasmic [2Fe-2S] and [4Fe-4S] proteins. First, a [2Fe-2S] cluster is transiently assembled on the scaffold protein ISCU (ISU1, ISU2 or ISU3). In a second step, the cluster is released from ISCU, transferred to a glutaredoxin, followed by the formation of mitochondrial [2Fe-2S] proteins, the synthesis of [4Fe-4S] clusters and their target-specific insertion into the recipient apoproteins. Cluster assembly on ISCU depends on the function of the cysteine desulfurase complex NFS1-ISD11, which serves as the sulfur donor for cluster synthesis, the iron-binding protein frataxin as the putative iron donor, and the electron transfer chain comprised of ferredoxin reductase and ferredoxin, which receive their electrons from NADH. The polypeptide is Iron-sulfur cluster assembly protein 1 (ISU1) (Arabidopsis thaliana (Mouse-ear cress)).